Reading from the N-terminus, the 250-residue chain is Putative inactive flavonol synthase 2 (250 aa).

The 80-residue stretch at 171-250 (TEYVMRINNY…EQWKVQECVA (80 aa)) folds into the Fe2OG dioxygenase domain. Residues histidine 195 and aspartate 197 each contribute to the Fe cation site.

The protein belongs to the iron/ascorbate-dependent oxidoreductase family.

This chain is Putative inactive flavonol synthase 2 (FLS2), found in Arabidopsis thaliana (Mouse-ear cress).